We begin with the raw amino-acid sequence, 549 residues long: Cytoplasmic trehalase (549 aa).

Substrate is bound by residues R168, 175–176 (WD), N212, 221–223 (RSQ), 292–294 (RDE), and G324. Catalysis depends on proton donor/acceptor residues D326 and E509. E525 lines the substrate pocket.

Belongs to the glycosyl hydrolase 37 family. As to quaternary structure, monomer.

It is found in the cytoplasm. The enzyme catalyses alpha,alpha-trehalose + H2O = alpha-D-glucose + beta-D-glucose. It functions in the pathway glycan degradation; trehalose degradation; D-glucose from alpha,alpha-trehalose: step 1/1. In terms of biological role, hydrolyzes trehalose to glucose. Could be involved, in cells returning to low osmolarity conditions, in the utilization of the accumulated cytoplasmic trehalose, which was synthesized in response to high osmolarity. The protein is Cytoplasmic trehalase of Escherichia coli O139:H28 (strain E24377A / ETEC).